We begin with the raw amino-acid sequence, 43 residues long: Thymosin beta-12 (43 aa).

2 stretches are compositionally biased toward basic and acidic residues: residues 1 to 25 (MSDKPDLAEVSNFDKTKLKKTETQE) and 33 to 43 (ETIEQEKQATA). The interval 1-43 (MSDKPDLAEVSNFDKTKLKKTETQEKNPLPTKETIEQEKQATA) is disordered. An N-acetylserine modification is found at serine 2.

Belongs to the thymosin beta family.

Its subcellular location is the cytoplasm. The protein resides in the cytoskeleton. Its function is as follows. Plays an important role in the organization of the cytoskeleton. Binds to and sequesters actin monomers (G actin) and therefore inhibits actin polymerization. The polypeptide is Thymosin beta-12 (Oncorhynchus mykiss (Rainbow trout)).